Here is a 340-residue protein sequence, read N- to C-terminus: Selenide, water dikinase (340 aa).

The active site involves U17. U17 is a non-standard amino acid (selenocysteine). ATP is bound by residues K20 and 45 to 47; that span reads NNE. Position 48 (D48) interacts with Mg(2+). ATP contacts are provided by residues D65, D88, and 136 to 138; that span reads GHT. A Mg(2+)-binding site is contributed by D88. D224 contacts Mg(2+).

Belongs to the selenophosphate synthase 1 family. Class I subfamily. In terms of assembly, homodimer. The cofactor is Mg(2+).

It catalyses the reaction hydrogenselenide + ATP + H2O = selenophosphate + AMP + phosphate + 2 H(+). Synthesizes selenophosphate from selenide and ATP. The chain is Selenide, water dikinase from Campylobacter jejuni (strain RM1221).